The sequence spans 389 residues: GDP-fucose protein O-fucosyltransferase 1 (389 aa).

Residues 1-21 (MRVSKVLTLASFISVCSYSEA) form the signal peptide. A glycan (N-linked (GlcNAc...) asparagine) is linked at Asn-24. An intrachain disulfide couples Cys-35 to Cys-37. Residue 40–43 (RFGN) coordinates substrate. A disulfide bridge connects residues Cys-119 and Cys-135. Substrate is bound at residue 238–240 (HLR). Intrachain disulfides connect Cys-249-Cys-281 and Cys-266-Cys-353. 356–357 (TF) is a binding site for substrate.

Belongs to the glycosyltransferase 65 family. As to quaternary structure, monomer.

The protein resides in the endoplasmic reticulum. The enzyme catalyses L-seryl-[protein] + GDP-beta-L-fucose = 3-O-(alpha-L-fucosyl)-L-seryl-[protein] + GDP + H(+). The catalysed reaction is L-threonyl-[protein] + GDP-beta-L-fucose = 3-O-(alpha-L-fucosyl)-L-threonyl-[protein] + GDP + H(+). It participates in protein modification; protein glycosylation. Catalyzes the reaction that attaches fucose through an O-glycosidic linkage to a conserved serine or threonine residue found in the consensus sequence C2-X(4,5)-[S/T]-C3 of EGF domains, where C2 and C3 are the second and third conserved cysteines. Specifically uses GDP-fucose as donor substrate and proper disulfide pairing of the substrate EGF domains is required for fucose transfer. This Caenorhabditis elegans protein is GDP-fucose protein O-fucosyltransferase 1.